A 400-amino-acid polypeptide reads, in one-letter code: 11-beta-hydroxysteroid dehydrogenase type 2 (400 aa).

An NAD(+)-binding site is contributed by threonine 82–alanine 111. Residue serine 219 participates in substrate binding. Residue tyrosine 232 is the Proton acceptor of the active site. The tract at residues proline 378–leucine 400 is disordered. Polar residues predominate over residues glutamine 389–leucine 400.

It belongs to the short-chain dehydrogenases/reductases (SDR) family. Interacts with ligand-free cytoplasmic NR3C2. Highly expressed in kidney, adrenal gland and distal colon, and at much lower levels in lung, hypothalamus, hippocampus, and midbrain.

It is found in the microsome. Its subcellular location is the endoplasmic reticulum. The catalysed reaction is an 11beta-hydroxysteroid + NAD(+) = an 11-oxosteroid + NADH + H(+). The enzyme catalyses corticosterone + NAD(+) = 11-dehydrocorticosterone + NADH + H(+). It catalyses the reaction 11beta,17beta-dihydroxyandrost-4-ene-3-one + NAD(+) = 17beta-hydroxyandrost-4-ene-3,11-dione + NADH + H(+). It carries out the reaction 11beta-hydroxyandrost-4-ene-3,17-dione + NAD(+) = androst-4-ene-3,11,17-trione + NADH + H(+). It participates in steroid metabolism. Its activity is regulated as follows. Inhibited by glycyrrhetinic acid. Induced by progesterone, through the Ihh signaling pathway. Catalyzes the conversion of biologically active 11beta-hydroxyglucocorticoids (11beta-hydroxysteroid) such as corticosterone, to inactive 11-ketoglucocorticoids (11-oxosteroid) such as 11-dehydrocorticosterone, in the presence of NAD(+). Functions as a dehydrogenase (oxidase), thereby decreasing the concentration of active glucocorticoids, thus protecting the nonselective mineralocorticoid receptor from occupation by glucocorticoids. Plays an important role in maintaining glucocorticoids balance during preimplantation and protects the fetus from excessive maternal corticosterone exposure. Catalyzes the oxidation of 11beta-hydroxytestosterone (11beta,17beta-dihydroxyandrost-4-ene-3-one) to 11-ketotestosterone (17beta-hydroxyandrost-4-ene-3,11-dione), a major bioactive androgen. Catalyzes the conversion of 11beta-hydroxyandrostenedione (11beta-hydroxyandrost-4-ene-3,17-dione) to 11-ketoandrostenedione (androst-4-ene-3,11,17-trione), which can be further metabolized to 11-ketotestosterone. Converts 7-beta-25-dihydroxycholesterol to 7-oxo-25-hydroxycholesterol in vitro. 7-beta-25-dihydroxycholesterol (not 7-oxo-25-hydroxycholesterol) acts as a ligand for the G-protein-coupled receptor (GPCR) Epstein-Barr virus-induced gene 2 (EBI2) and may thereby regulate immune cell migration. The polypeptide is 11-beta-hydroxysteroid dehydrogenase type 2 (Hsd11b2) (Rattus norvegicus (Rat)).